We begin with the raw amino-acid sequence, 197 residues long: Holliday junction branch migration complex subunit RuvA (197 aa).

The tract at residues 1 to 64 is domain I; sequence MYEYIKGKYI…EDFIGVYGFL (64 aa). The interval 65 to 144 is domain II; it reads TKDELSMFKL…DILEEDDEQI (80 aa). Residues 145-149 are flexible linker; sequence INKVA. Positions 149-197 are domain III; it reads ADDKKVLEAVAALVTLGYSEKEANKVINSCDKNNSLEQIIKEALKYLMK.

This sequence belongs to the RuvA family. As to quaternary structure, homotetramer. Forms an RuvA(8)-RuvB(12)-Holliday junction (HJ) complex. HJ DNA is sandwiched between 2 RuvA tetramers; dsDNA enters through RuvA and exits via RuvB. An RuvB hexamer assembles on each DNA strand where it exits the tetramer. Each RuvB hexamer is contacted by two RuvA subunits (via domain III) on 2 adjacent RuvB subunits; this complex drives branch migration. In the full resolvosome a probable DNA-RuvA(4)-RuvB(12)-RuvC(2) complex forms which resolves the HJ.

It is found in the cytoplasm. Functionally, the RuvA-RuvB-RuvC complex processes Holliday junction (HJ) DNA during genetic recombination and DNA repair, while the RuvA-RuvB complex plays an important role in the rescue of blocked DNA replication forks via replication fork reversal (RFR). RuvA specifically binds to HJ cruciform DNA, conferring on it an open structure. The RuvB hexamer acts as an ATP-dependent pump, pulling dsDNA into and through the RuvAB complex. HJ branch migration allows RuvC to scan DNA until it finds its consensus sequence, where it cleaves and resolves the cruciform DNA. The protein is Holliday junction branch migration complex subunit RuvA of Clostridium botulinum (strain ATCC 19397 / Type A).